The primary structure comprises 688 residues: Polyphosphate kinase (688 aa).

Position 45 (asparagine 45) interacts with ATP. Mg(2+) is bound by residues arginine 375 and arginine 405. Residues 430-464 (PGLKIHAKLFLISRKENGEVVRYAHIGTGNFNEKT) enclose the PLD phosphodiesterase domain. Histidine 435 acts as the Phosphohistidine intermediate in catalysis. The ATP site is built by tyrosine 468, arginine 564, and histidine 592.

The protein belongs to the polyphosphate kinase 1 (PPK1) family. Requires Mg(2+) as cofactor. An intermediate of this reaction is the autophosphorylated ppk in which a phosphate is covalently linked to a histidine residue through a N-P bond.

The catalysed reaction is [phosphate](n) + ATP = [phosphate](n+1) + ADP. Its function is as follows. Catalyzes the reversible transfer of the terminal phosphate of ATP to form a long-chain polyphosphate (polyP). The chain is Polyphosphate kinase from Escherichia coli O157:H7.